The primary structure comprises 182 residues: MDDVRGALLQQIKDKAVVHGKVTLSSGLEADYYVDLRRITLDGEAAPLVGQVLLDLTADLDFDAVGGLTMGADPVAAAMLHAAAARGRRLDAFVVRKAAKAHGLQRRVEGPEIKGRRVLVVEDTSTTGGSPLTAVEAVREAGAEVVGVATIVDRATGAAEKIEAGAGVPYRFAYDKDELGLD.

5-phospho-alpha-D-ribose 1-diphosphate-binding positions include Arg96, Lys97, Lys100, His102, and 122 to 130 (EDTSTTGGS). Thr126 and Arg154 together coordinate orotate.

This sequence belongs to the purine/pyrimidine phosphoribosyltransferase family. PyrE subfamily. Homodimer. The cofactor is Mg(2+).

It carries out the reaction orotidine 5'-phosphate + diphosphate = orotate + 5-phospho-alpha-D-ribose 1-diphosphate. The protein operates within pyrimidine metabolism; UMP biosynthesis via de novo pathway; UMP from orotate: step 1/2. In terms of biological role, catalyzes the transfer of a ribosyl phosphate group from 5-phosphoribose 1-diphosphate to orotate, leading to the formation of orotidine monophosphate (OMP). The protein is Orotate phosphoribosyltransferase of Streptomyces avermitilis (strain ATCC 31267 / DSM 46492 / JCM 5070 / NBRC 14893 / NCIMB 12804 / NRRL 8165 / MA-4680).